Reading from the N-terminus, the 622-residue chain is Phosphoribomutase (622 aa).

Residues threonine 57, arginine 61, 158–159 (SH), and lysine 168 contribute to the substrate site. Serine 158 acts as the Phosphoserine intermediate in catalysis. Mg(2+) is bound at residue serine 158. Serine 158 carries the phosphoserine modification. Residues aspartate 325, aspartate 327, and aspartate 329 each coordinate Mg(2+). Substrate-binding positions include 329–330 (DR), threonine 404, 428–430 (EEA), and lysine 442.

The protein belongs to the phosphohexose mutase family. Mg(2+) serves as cofactor.

It is found in the cytoplasm. The protein resides in the nucleus. It carries out the reaction alpha-D-ribose 1-phosphate = D-ribose 5-phosphate. Major phosphoribomutase that converts ribose 1-phosphate to ribose 5-phosphate. Involved in ribose salvage via the pentose phosphate pathway. The sequence is that of Phosphoribomutase from Saccharomyces cerevisiae (strain ATCC 204508 / S288c) (Baker's yeast).